The primary structure comprises 203 residues: Small ribosomal subunit protein uS4 (203 aa).

The region spanning 93–156 is the S4 RNA-binding domain; that stretch reads RRLDNVVYRL…IKVPAILEAV (64 aa).

The protein belongs to the universal ribosomal protein uS4 family. As to quaternary structure, part of the 30S ribosomal subunit. Contacts protein S5. The interaction surface between S4 and S5 is involved in control of translational fidelity.

Its function is as follows. One of the primary rRNA binding proteins, it binds directly to 16S rRNA where it nucleates assembly of the body of the 30S subunit. Functionally, with S5 and S12 plays an important role in translational accuracy. This is Small ribosomal subunit protein uS4 from Streptococcus suis (strain 98HAH33).